The sequence spans 517 residues: Glucans biosynthesis protein G (517 aa).

Residues 1-28 (MKHKLQMMKMRWLSAAVMLTLYTSSSWA) form the signal peptide.

It belongs to the OpgD/OpgG family.

It localises to the periplasm. It participates in glycan metabolism; osmoregulated periplasmic glucan (OPG) biosynthesis. Involved in the biosynthesis of osmoregulated periplasmic glucans (OPGs). This is Glucans biosynthesis protein G from Escherichia coli O1:K1 / APEC.